The following is an 856-amino-acid chain: Alanine/arginine aminopeptidase (856 aa).

Substrate contacts are provided by residues E132 and 264-268 (GAMEN). H300 contributes to the Zn(2+) binding site. E301 functions as the Proton acceptor in the catalytic mechanism. Residues H304 and E323 each coordinate Zn(2+).

The protein belongs to the peptidase M1 family. Zn(2+) serves as cofactor.

In terms of biological role, positive effector of glycogen accumulation. May be involved in nutrient-sensing. This chain is Alanine/arginine aminopeptidase (AAP1), found in Saccharomyces cerevisiae (strain ATCC 204508 / S288c) (Baker's yeast).